Consider the following 156-residue polypeptide: Transcriptional repressor NrdR (156 aa).

The segment at 3-34 (CPYCGETEDKVIDSRQGKEADVIRRRRECLSC) is a zinc-finger region. The 91-residue stretch at 49–139 (LVIIKKDGRR…VYREFKHVND (91 aa)) folds into the ATP-cone domain.

It belongs to the NrdR family. The cofactor is Zn(2+).

Negatively regulates transcription of bacterial ribonucleotide reductase nrd genes and operons by binding to NrdR-boxes. The sequence is that of Transcriptional repressor NrdR from Desulfatibacillum aliphaticivorans.